The primary structure comprises 143 residues: FAM161 homolog famh-136 (143 aa).

This sequence belongs to the FAM136 family.

Its subcellular location is the cytoplasm. In terms of biological role, may play a role in locomotion and behavior. The chain is FAM161 homolog famh-136 from Caenorhabditis elegans.